The chain runs to 259 residues: Proteasome subunit alpha (259 aa).

Positions 222–259 (RITGPALEQLIPAEPAPASEPAPESKPDTETKPADPQD) are disordered. Residues 244-259 (PESKPDTETKPADPQD) are compositionally biased toward basic and acidic residues.

Belongs to the peptidase T1A family. As to quaternary structure, the 20S proteasome core is composed of 14 alpha and 14 beta subunits that assemble into four stacked heptameric rings, resulting in a barrel-shaped structure. The two inner rings, each composed of seven catalytic beta subunits, are sandwiched by two outer rings, each composed of seven alpha subunits. The catalytic chamber with the active sites is on the inside of the barrel. Has a gated structure, the ends of the cylinder being occluded by the N-termini of the alpha-subunits. Is capped by the proteasome-associated ATPase, ARC.

Its subcellular location is the cytoplasm. It functions in the pathway protein degradation; proteasomal Pup-dependent pathway. Its activity is regulated as follows. The formation of the proteasomal ATPase ARC-20S proteasome complex, likely via the docking of the C-termini of ARC into the intersubunit pockets in the alpha-rings, may trigger opening of the gate for substrate entry. Interconversion between the open-gate and close-gate conformations leads to a dynamic regulation of the 20S proteasome proteolysis activity. In terms of biological role, component of the proteasome core, a large protease complex with broad specificity involved in protein degradation. The sequence is that of Proteasome subunit alpha from Rhodococcus jostii (strain RHA1).